Consider the following 311-residue polypeptide: Transcription factor BIM2 (311 aa).

2 disordered regions span residues 1–60 (MRTG…RRSK) and 271–311 (ANQG…MKTL). Composition is skewed to basic and acidic residues over residues 33 to 44 (SNRDSKENDKAS) and 51 to 60 (SVTEQRRRSK). The bHLH domain occupies 45 to 95 (AIRSKHSVTEQRRRSKINERFQILRELIPNSEQKRDTASFLLEVIDYVQYL).

In terms of assembly, homodimer. Interacts with the N-terminus of BZR2/BES1. In terms of tissue distribution, expressed constitutively in roots, leaves, stems, and flowers.

It localises to the nucleus. Positive brassinosteroid-signaling protein. The protein is Transcription factor BIM2 (BIM2) of Arabidopsis thaliana (Mouse-ear cress).